The following is a 182-amino-acid chain: uncharacterized protein (182 aa).

Residues 55 to 182 (VNLHDLEKLC…GVKGMFWYPL (128 aa)) form the N-acetyltransferase domain.

This sequence belongs to the acetyltransferase family. Ycf52 subfamily.

It is found in the plastid. It localises to the chloroplast. This is an uncharacterized protein from Gracilaria tenuistipitata var. liui (Red alga).